We begin with the raw amino-acid sequence, 401 residues long: Nodal homolog 3-B (401 aa).

Positions 1–18 (MAFLSLFLCLVFSSPLMA) are cleaved as a signal peptide. The propeptide occupies 19–274 (MPPALQGRKA…KVNGFRRLRR (256 aa)). 3 N-linked (GlcNAc...) asparagine glycosylation sites follow: asparagine 168, asparagine 337, and asparagine 344. 2 disulfides stabilise this stretch: cysteine 299–cysteine 365 and cysteine 328–cysteine 396.

Belongs to the TGF-beta family. Monomer. The propeptide region interacts with bmp4 in a non-covalent manner. In terms of tissue distribution, expressed in the dorsal marginal region of late blastula, becoming restricted to the Spemann organizer at the early gastrula stage.

The protein localises to the secreted. Exhibits mesoderm-dorsalizing activity and neural-inducing activity, but lacks mesoderm-inducing activity. Regulates the expression of specific mesodermal and neural genes. Induces convergent extension movements at the embryonic midline by activating the fgf signaling pathway to induce t/bra expression in the organizer region. Acts with wnt11 to induce Spemann organizer cells and induce axis formation. The unprocessed protein antagonizes bmp-signaling. In Xenopus tropicalis (Western clawed frog), this protein is Nodal homolog 3-B.